A 1755-amino-acid chain; its full sequence is Transposon Ty1-GR1 Gag-Pol polyprotein (1755 aa).

Residues 1 to 16 show a composition bias toward low complexity; the sequence is MESQQLSQHSHISHGS. Disordered regions lie at residues 1–93, 126–173, and 352–421; these read MESQ…MMTQ, PQSQ…RPPP, and GSRN…SKST. Composition is skewed to polar residues over residues 48 to 60, 71 to 93, and 127 to 152; these read TKAN…TPAS, SPQT…MMTQ, and QSQF…GNTF. Residues 153-165 show a composition bias toward low complexity; sequence TDSSSADSDMTST. An RNA-binding region spans residues 299-401; sequence NNGIHINNKV…NSKSKTARAH (103 aa). Positions 402 to 418 are enriched in low complexity; that stretch reads NVSTSNNSPSTDNDSIS. At Ser-416 the chain carries Phosphoserine. Asp-461 functions as the For protease activity; shared with dimeric partner in the catalytic mechanism. An integrase-type zinc finger-like region spans residues 583-640; sequence NVHTSESTRKYPYPFIHRMLAHANAQTIRYSLKNNTITYFNESDVDWSSAIDYQCPDC. The 176-residue stretch at 660 to 835 folds into the Integrase catalytic domain; the sequence is NSYEPFQYLH…AGLDISTLLP (176 aa). Positions 671 and 736 each coordinate Mg(2+). Disordered regions lie at residues 956 to 1087, 1092 to 1111, and 1130 to 1187; these read SKAV…ETEK, RSPS…NIVP, and DLPL…DNET. Residues 960–969 show a composition bias toward low complexity; the sequence is SPTDSTPPST. Over residues 1005–1015 the composition is skewed to polar residues; the sequence is STPQISNIEST. The span at 1038 to 1053 shows a compositional bias: basic and acidic residues; sequence ESSHASKSKDFRHSDS. Polar residues-rich tracts occupy residues 1054-1082 and 1101-1111; these read YSEN…QISD and PENNSSHNIVP. The Bipartite nuclear localization signal signature appears at 1178–1212; that stretch reads KKRSLEDNETEIKVSRDTWNTKNMRSLEPPRSKKR. A Reverse transcriptase Ty1/copia-type domain is found at 1338 to 1476; the sequence is NNYYITQLDI…DILGLEIKYQ (139 aa). Residues Asp-1346, Asp-1427, Asp-1428, Asp-1610, Glu-1652, and Asp-1685 each contribute to the Mg(2+) site. The RNase H Ty1/copia-type domain maps to 1610-1752; the sequence is DASYGNQPYY…IKTFKLLTNK (143 aa).

As to quaternary structure, the capsid protein forms a homotrimer, from which the VLPs are assembled. The protease is a homodimer, whose active site consists of two apposed aspartic acid residues. Initially, virus-like particles (VLPs) are composed of the structural unprocessed proteins Gag and Gag-Pol, and also contain the host initiator methionine tRNA (tRNA(i)-Met) which serves as a primer for minus-strand DNA synthesis, and a dimer of genomic Ty RNA. Processing of the polyproteins occurs within the particle and proceeds by an ordered pathway, called maturation. First, the protease (PR) is released by autocatalytic cleavage of the Gag-Pol polyprotein yielding capsid protein p45 and a Pol-p154 precursor protein. This cleavage is a prerequisite for subsequent processing of Pol-p154 at the remaining sites to release the mature structural and catalytic proteins. Maturation takes place prior to the RT reaction and is required to produce transposition-competent VLPs.

It localises to the cytoplasm. Its subcellular location is the nucleus. It catalyses the reaction DNA(n) + a 2'-deoxyribonucleoside 5'-triphosphate = DNA(n+1) + diphosphate. It carries out the reaction Endonucleolytic cleavage to 5'-phosphomonoester.. In terms of biological role, capsid protein (CA) is the structural component of the virus-like particle (VLP), forming the shell that encapsulates the retrotransposons dimeric RNA genome. The particles are assembled from trimer-clustered units and there are holes in the capsid shells that allow for the diffusion of macromolecules. CA also has nucleocapsid-like chaperone activity, promoting primer tRNA(i)-Met annealing to the multipartite primer-binding site (PBS), dimerization of Ty1 RNA and initiation of reverse transcription. Its function is as follows. The aspartyl protease (PR) mediates the proteolytic cleavages of the Gag and Gag-Pol polyproteins after assembly of the VLP. Functionally, reverse transcriptase/ribonuclease H (RT) is a multifunctional enzyme that catalyzes the conversion of the retro-elements RNA genome into dsDNA within the VLP. The enzyme displays a DNA polymerase activity that can copy either DNA or RNA templates, and a ribonuclease H (RNase H) activity that cleaves the RNA strand of RNA-DNA heteroduplexes during plus-strand synthesis and hydrolyzes RNA primers. The conversion leads to a linear dsDNA copy of the retrotransposon that includes long terminal repeats (LTRs) at both ends. Integrase (IN) targets the VLP to the nucleus, where a subparticle preintegration complex (PIC) containing at least integrase and the newly synthesized dsDNA copy of the retrotransposon must transit the nuclear membrane. Once in the nucleus, integrase performs the integration of the dsDNA into the host genome. This Saccharomyces cerevisiae (strain ATCC 204508 / S288c) (Baker's yeast) protein is Transposon Ty1-GR1 Gag-Pol polyprotein (TY1B-GR1).